We begin with the raw amino-acid sequence, 603 residues long: Cdc42-interacting protein 4 (603 aa).

Residues 1 to 117 are required for podosome formation and interaction with AKAP9 and microtubules; the sequence is MDWGTELWDQ…EMKQERKMHF (117 aa). Residues 1-117 are required for translocation to the plasma membrane in response to insulin; that stretch reads MDWGTELWDQ…EMKQERKMHF (117 aa). In terms of domain architecture, F-BAR spans 1-264; the sequence is MDWGTELWDQ…AAESVDAKND (264 aa). A coiled-coil region spans residues 67-259; it reads FSQQQSFVQL…EGMKVAAESV (193 aa). Residues 293-539 are interaction with CDC42; that stretch reads RVPSDSSLGT…YTEFDEDFEE (247 aa). The interval 293–603 is interaction with PDE6G; sequence RVPSDSSLGT…PTSYLRVTLN (311 aa). Residues 295–358 are disordered; the sequence is PSDSSLGTPD…PSSPRSGRDP (64 aa). Phosphoserine is present on residues S296, S298, and S299. Residues 316-329 show a composition bias toward basic residues; that stretch reads SRAKRWPFGKKNKP. Over residues 333–346 the composition is skewed to low complexity; sequence SLSLLGGHLPSTLS. 2 positions are modified to phosphoserine: S335 and S351. Positions 388-481 form a coiled coil; it reads TEDFSHLPPE…ESRVLSNRGD (94 aa). In terms of domain architecture, REM-1 spans 393-470; it reads HLPPEQQRKR…VQKYEAWLAE (78 aa). Residues 471 to 603 are required for interaction with FASLG and localization to lysosomes; it reads AESRVLSNRG…PTSYLRVTLN (133 aa). Residues 477-541 form a disordered region; that stretch reads SNRGDSLSRH…EFDEDFEEPA (65 aa). S482 carries the post-translational modification Phosphoserine. Positions 487 to 543 are interaction with DNM2 and WASL; that stretch reads ARPPDPPTTAPPDSSSSSTNSGSQDNKESSSEEPPSEGQDTPIYTEFDEDFEEPASP. Residues 497–510 are compositionally biased toward low complexity; it reads PPDSSSSSTNSGSQ. Positions 532–603 are interaction with DNM1 and WASL; sequence EFDEDFEEPA…PTSYLRVTLN (72 aa). The interval 540-603 is required for podosome formation; that stretch reads PASPIGQCVA…PTSYLRVTLN (64 aa). An SH3 domain is found at 542–603; sequence SPIGQCVAIY…PTSYLRVTLN (62 aa). Positions 546–603 are interaction with WAS; sequence QCVAIYHFEGSSEGTVSMSEGEDLSLMEEDKGDGWTRVRRKQGAEGYVPTSYLRVTLN. An interaction with ARHGAP17, DAAM1, DIAPH1 and DIAPH2 region spans residues 548–603; sequence VAIYHFEGSSEGTVSMSEGEDLSLMEEDKGDGWTRVRRKQGAEGYVPTSYLRVTLN.

Belongs to the FNBP1 family. Homodimerizes, the dimers can polymerize end-to-end to form filamentous structures. Interacts with AKAP9, ARHGAP17, DAAM1, DIAPH1, DIAPH2, DNM1, FASLG/FASL, GAPVD1, LYN, microtubules, PDE6G, SRC and WAS/WASP. Interacts with the ligand binding domain of the thyroid receptor (TR) in the presence of thyroid hormone. May interact with CTNNB1 and HD/HTT. Interacts specifically with GTP-bound CDC42 and RHOQ. Interacts with DNM2 and WASL. In terms of processing, tyrosine phosphorylated. Also phosphorylated by PKA.

It is found in the cytoplasm. The protein localises to the cytoskeleton. The protein resides in the cell cortex. It localises to the lysosome. Its subcellular location is the golgi apparatus. It is found in the cell membrane. The protein localises to the cell projection. The protein resides in the phagocytic cup. Functionally, required to coordinate membrane tubulation with reorganization of the actin cytoskeleton during endocytosis. Binds to lipids such as phosphatidylinositol 4,5-bisphosphate and phosphatidylserine and promotes membrane invagination and the formation of tubules. Also promotes CDC42-induced actin polymerization by recruiting WASL/N-WASP which in turn activates the Arp2/3 complex. Actin polymerization may promote the fission of membrane tubules to form endocytic vesicles. Required for the formation of podosomes, actin-rich adhesion structures specific to monocyte-derived cells. May be required for the lysosomal retention of FASLG/FASL. Required for translocation of GLUT4 to the plasma membrane in response to insulin signaling. The sequence is that of Cdc42-interacting protein 4 (Trip10) from Mus musculus (Mouse).